Reading from the N-terminus, the 443-residue chain is ATP-dependent protease ATPase subunit HslU (443 aa).

ATP-binding positions include Ile-18, 60–65, Asp-256, Glu-321, and Arg-393; that span reads GVGKTE.

It belongs to the ClpX chaperone family. HslU subfamily. In terms of assembly, a double ring-shaped homohexamer of HslV is capped on each side by a ring-shaped HslU homohexamer. The assembly of the HslU/HslV complex is dependent on binding of ATP.

The protein localises to the cytoplasm. ATPase subunit of a proteasome-like degradation complex; this subunit has chaperone activity. The binding of ATP and its subsequent hydrolysis by HslU are essential for unfolding of protein substrates subsequently hydrolyzed by HslV. HslU recognizes the N-terminal part of its protein substrates and unfolds these before they are guided to HslV for hydrolysis. The protein is ATP-dependent protease ATPase subunit HslU of Escherichia coli O139:H28 (strain E24377A / ETEC).